Consider the following 787-residue polypeptide: Protein PAT1 homolog 2 (787 aa).

Disordered stretches follow at residues 94–120 (KHLG…WTQD), 134–221 (EQVQ…NASP), 338–374 (VREH…GLQF), 411–445 (LAKK…QQPQ), and 765–787 (VSES…FVRG). The segment covering 105-120 (GSFSRESSTATDWTQD) has biased composition (polar residues). Residues 142–153 (SSQPQSSPNSNS) show a composition bias toward low complexity. 3 stretches are compositionally biased toward polar residues: residues 154–171 (LYRT…QHYS), 180–198 (STFT…SSPS), and 208–221 (GGSQ…NASP). Residues Ser184 and Ser192 each carry the phosphoserine modification. Residues 341 to 353 (HKHKSSHRSRKNR) are compositionally biased toward basic residues. Composition is skewed to polar residues over residues 355-373 (GISQ…SGLQ) and 436-445 (SRNSSDQQPQ).

Functionally, activator of mRNA decapping. Involved in mRNA decay via decapping. This Arabidopsis thaliana (Mouse-ear cress) protein is Protein PAT1 homolog 2.